The sequence spans 153 residues: Lipoprotein signal peptidase (153 aa).

Helical transmembrane passes span 52–72 (ILAG…IGIV) and 81–101 (GQML…GNFI). Catalysis depends on residues D111 and D129. A helical membrane pass occupies residues 124 to 144 (IFNIADSSLCVGVILLFIHML).

Belongs to the peptidase A8 family.

It is found in the cell membrane. The catalysed reaction is Release of signal peptides from bacterial membrane prolipoproteins. Hydrolyzes -Xaa-Yaa-Zaa-|-(S,diacylglyceryl)Cys-, in which Xaa is hydrophobic (preferably Leu), and Yaa (Ala or Ser) and Zaa (Gly or Ala) have small, neutral side chains.. The protein operates within protein modification; lipoprotein biosynthesis (signal peptide cleavage). Its function is as follows. This protein specifically catalyzes the removal of signal peptides from prolipoproteins. This Bacillus velezensis (strain DSM 23117 / BGSC 10A6 / LMG 26770 / FZB42) (Bacillus amyloliquefaciens subsp. plantarum) protein is Lipoprotein signal peptidase.